The sequence spans 1196 residues: DNA-directed RNA polymerase subunit beta (1196 aa).

Belongs to the RNA polymerase beta chain family. The RNAP catalytic core consists of 2 alpha, 1 beta, 1 beta' and 1 omega subunit. When a sigma factor is associated with the core the holoenzyme is formed, which can initiate transcription.

It carries out the reaction RNA(n) + a ribonucleoside 5'-triphosphate = RNA(n+1) + diphosphate. DNA-dependent RNA polymerase catalyzes the transcription of DNA into RNA using the four ribonucleoside triphosphates as substrates. In Lactococcus lactis subsp. lactis (strain IL1403) (Streptococcus lactis), this protein is DNA-directed RNA polymerase subunit beta.